Here is a 510-residue protein sequence, read N- to C-terminus: NAD(P)H-quinone oxidoreductase subunit 2 B, chloroplastic (510 aa).

12 helical membrane passes run 24–44, 57–77, 99–119, 124–144, 183–203, 227–247, 295–315, 323–343, 347–367, 395–415, 418–438, and 484–504; these read LLLF…GLIL, IPWL…ALLF, IFQF…VEYI, MAIT…MFLC, YLLM…WLYG, PGIS…LSPA, WHLL…LIAI, MLAY…IVGD, GYAS…GTFA, ALSS…AGFF, LHLF…IGLL, and MIVC…IIAI.

The protein belongs to the complex I subunit 2 family. As to quaternary structure, NDH is composed of at least 16 different subunits, 5 of which are encoded in the nucleus.

The protein resides in the plastid. It is found in the chloroplast thylakoid membrane. It catalyses the reaction a plastoquinone + NADH + (n+1) H(+)(in) = a plastoquinol + NAD(+) + n H(+)(out). It carries out the reaction a plastoquinone + NADPH + (n+1) H(+)(in) = a plastoquinol + NADP(+) + n H(+)(out). NDH shuttles electrons from NAD(P)H:plastoquinone, via FMN and iron-sulfur (Fe-S) centers, to quinones in the photosynthetic chain and possibly in a chloroplast respiratory chain. The immediate electron acceptor for the enzyme in this species is believed to be plastoquinone. Couples the redox reaction to proton translocation, and thus conserves the redox energy in a proton gradient. The chain is NAD(P)H-quinone oxidoreductase subunit 2 B, chloroplastic from Calycanthus floridus var. glaucus (Eastern sweetshrub).